The sequence spans 419 residues: Equilibrative nucleotide transporter 5 (419 aa).

Helical transmembrane passes span 20–40 (MVVCCILGIGSLVSWNSLLSV), 56–76 (VLTFVYQPFSIGTIVIFAYNE), 86–106 (LIGYIVFTTSIFLLIILDLAT), 108–128 (GHGGIGPYIVLCAIVGSFGFA), 142–162 (LMCPELIQSFVAGLAVAGALT), 186–206 (IFLAISTLVEFLCVLLYAYVF), 265–285 (YVVNLFLIYVLTLSILPGFLY), 292–312 (GLGSWYALVLIAMYNWWDLVG), 327–347 (KGLTVAVLTRFLLVPAFYFTA), 354–374 (WMILLVSILGLTNGHLTVCIL), and 393–413 (LVLFILWGAFVGCALGWLWLI).

This sequence belongs to the SLC29A/ENT transporter (TC 2.A.57) family.

The protein localises to the cell membrane. Functionally, may be involved in nucleoside transport. The chain is Equilibrative nucleotide transporter 5 (ENT5) from Arabidopsis thaliana (Mouse-ear cress).